Here is a 478-residue protein sequence, read N- to C-terminus: MGKLLVVMLIGMFLAFESLEALDYGDALNKSILFFEGQRSGKLPTNQRVKWRADSGLSDGASANVNLIGGYYDAGDNVKFVWPMSFTTTLLSWAALEYQNEITFVNQLGYLRSTIKWGTNFILRAHTSTNMLYTQVGDGNSDHSCWERPEDMDTPRTLYSISSSSPGSEAAGEAAAALAAASLVFKLVDSTYSSKLLNNAKSLFEFADKYRGSYQASCPFYCSHSGYQDELLWAAAWLYKATGEKSYLNYVISNKDWSKAINEFSWDNKFAGVQALLASEFYNGANDLEKFKTDVESFVCALMPGSSSQQIKPTPGGILFIRDSSNLQYVTTATTILFYYSKTLTKAGVGSIQCGSTQFTVSQIRNFAKSQVDYILGNNPLKMSYMVGFGTKYPTQPHHRGSSLPSIQSKPEKIDCNGGFSYYNFDTPNPNVHTGAIVGGPNSSDQYSDKRTDYSHAEPTTYINAAFIGSVAALISSS.

Residues 1–21 (MGKLLVVMLIGMFLAFESLEA) form the signal peptide. An N-linked (GlcNAc...) asparagine glycan is attached at Asn29. The Nucleophile role is filled by Asp76. The active site involves His398. The disordered stretch occupies residues 433–452 (HTGAIVGGPNSSDQYSDKRT). Asn442 is a glycosylation site (N-linked (GlcNAc...) asparagine). Catalysis depends on residues Asp449 and Glu458.

This sequence belongs to the glycosyl hydrolase 9 (cellulase E) family.

The protein localises to the secreted. The catalysed reaction is Endohydrolysis of (1-&gt;4)-beta-D-glucosidic linkages in cellulose, lichenin and cereal beta-D-glucans.. In Arabidopsis thaliana (Mouse-ear cress), this protein is Endoglucanase 18.